Consider the following 428-residue polypeptide: Zinc metalloproteinase nas-27 (428 aa).

Positions 1 to 17 are cleaved as a signal peptide; that stretch reads MQILPIFFPLLITSLHA. Residues 18 to 57 constitute a propeptide that is removed on maturation; that stretch reads IPRGRRAVRNRNEGDINSLVGVGQYLYQGDIAVVKSRARR. One can recognise a Peptidase M12A domain in the interval 58–255; sequence AVIRQKHKKW…SRMNVLYNCH (198 aa). 6 disulfides stabilise this stretch: Cys-99-Cys-254, Cys-120-Cys-141, Cys-258-Cys-276, Cys-281-Cys-290, Cys-306-Cys-339, and Cys-366-Cys-386. His-150 is a binding site for Zn(2+). Residue Glu-151 is part of the active site. Zn(2+)-binding residues include His-154 and His-160. A glycan (N-linked (GlcNAc...) asparagine) is linked at Asn-181. Residues 250–291 enclose the EGF-like domain; that stretch reads VLYNCHERCANTLNRCQQGGYPAPSDCSQCVCPDGFGGNFCE. Positions 306–428 constitute a CUB domain; sequence CGGVLWASET…LDFNIEYRAV (123 aa). The N-linked (GlcNAc...) asparagine glycan is linked to Asn-377.

Requires Zn(2+) as cofactor.

It is found in the secreted. Metalloprotease. This Caenorhabditis elegans protein is Zinc metalloproteinase nas-27 (nas-27).